A 504-amino-acid chain; its full sequence is L-carnitine/gamma-butyrobetaine antiporter (504 aa).

The next 12 membrane-spanning stretches (helical) occupy residues 10–30 (IEPK…WLTV), 51–71 (WGWA…WLVF), 92–112 (IFMM…SIEI), 143–163 (GPLP…FFFV), 195–215 (FYLV…TPLV), 231–251 (LDAI…ACGL), 263–283 (SYLS…SFIM), 316–336 (WTVF…IFLA), 347–367 (LCFG…TVLG), 398–418 (WAAL…CFIA), 446–466 (LLVR…LLAL), and 475–495 (AIIA…LSFI).

Belongs to the BCCT transporter (TC 2.A.15) family. CaiT subfamily. In terms of assembly, homotrimer.

The protein resides in the cell inner membrane. The enzyme catalyses 4-(trimethylamino)butanoate(in) + (R)-carnitine(out) = 4-(trimethylamino)butanoate(out) + (R)-carnitine(in). Its pathway is amine and polyamine metabolism; carnitine metabolism. Functionally, catalyzes the exchange of L-carnitine for gamma-butyrobetaine. The polypeptide is L-carnitine/gamma-butyrobetaine antiporter (Escherichia coli O81 (strain ED1a)).